Here is a 125-residue protein sequence, read N- to C-terminus: Glucose-1-phosphate adenylyltransferase small subunit (125 aa).

It belongs to the bacterial/plant glucose-1-phosphate adenylyltransferase family. As to quaternary structure, heterotetramer. In terms of tissue distribution, leaves.

Its subcellular location is the plastid. The protein resides in the chloroplast. The protein localises to the amyloplast. The enzyme catalyses alpha-D-glucose 1-phosphate + ATP + H(+) = ADP-alpha-D-glucose + diphosphate. The protein operates within glycan biosynthesis; starch biosynthesis. Activated by 3'phosphoglycerate, inhibited by orthophosphate. Allosteric regulation. Functionally, this protein plays a role in synthesis of starch. It catalyzes the synthesis of the activated glycosyl donor, ADP-glucose from Glc-1-P and ATP. This Zea mays (Maize) protein is Glucose-1-phosphate adenylyltransferase small subunit (GLG1).